The chain runs to 352 residues: Respiratory nitrate reductase subunit beta (352 aa).

One can recognise a 4Fe-4S ferredoxin-type 1 domain in the interval 20–48 (VAMVMDLNKCIGCQTCTVACKSLWTEGGG). The [4Fe-4S] cluster site is built by cysteine 29, cysteine 32, cysteine 35, and cysteine 39. Disordered regions lie at residues 63–95 (KGYP…KEDY) and 111–131 (SDRP…DEDQ). Residues 78 to 95 (SSEHKERKPGQIPDKEDY) show a composition bias toward basic and acidic residues. 4Fe-4S ferredoxin-type domains follow at residues 139 to 170 (SYYF…KREE) and 172 to 201 (GIVL…YNAT). Residues cysteine 148, cysteine 151, and cysteine 156 each coordinate [4Fe-4S] cluster. [3Fe-4S] cluster is bound by residues cysteine 160, cysteine 181, and cysteine 187. Residues cysteine 191, cysteine 208, cysteine 211, cysteine 229, and cysteine 233 each coordinate [4Fe-4S] cluster.

In terms of assembly, probable multiprotein complex; a catalytic heterodimer of an alpha and beta chain is proposed to associate with additional subunits involved in membrane attachment and electron transfer. Requires [4Fe-4S] cluster as cofactor. It depends on [3Fe-4S] cluster as a cofactor.

It localises to the cell membrane. The catalysed reaction is nitrate + a quinol = a quinone + nitrite + H2O. Inhibited by cyanide, azide and antimycin A. Enzyme stability is not dependent on salt concentration. In terms of biological role, the respiratory membrane-bound nitrate reductase enzyme complex plays a role in generation of metabolic energy by using nitrate as a terminal electron acceptor during anaerobic conditions. The beta chain is an electron transfer unit containing four cysteine clusters involved in the formation of iron-sulfur centers. This is Respiratory nitrate reductase subunit beta (narH) from Haloferax mediterranei (strain ATCC 33500 / DSM 1411 / JCM 8866 / NBRC 14739 / NCIMB 2177 / R-4) (Halobacterium mediterranei).